The primary structure comprises 372 residues: MSFQVPTVGVEEEYQLVDPRSGALIPNCKEVMRTIRRNGGSEEAHSEIQHELHLNQIEMASDVCSSLEEVRDALTQTRRMLIDAARSNETELASAGTNPLPIPTDDALTPKDRYQAMTDRYQQIARDLFIFGCHVHVAMEDRELGIQVMNRCRRWLPILQAITANSPYWDGVDTGYASYRRELWAQWPMAGPPAHFDSLADYQSCVDDLVACGAIKDESFLYWDIRLPTRVPTIEFRAADVMTRVEETVGYVGMIRAIVMLAISEEEQGKPIVPIRPSVLSYAIWHAARYGMNEQLVDPESREMIPASELLNRLMTAIDPALKATGEARPVEAFANQLIKSGTGADRQRRGGELSSVVANVVAETVPSAILA.

This sequence belongs to the glutamate--cysteine ligase type 2 family. YbdK subfamily.

The enzyme catalyses L-cysteine + L-glutamate + ATP = gamma-L-glutamyl-L-cysteine + ADP + phosphate + H(+). Functionally, ATP-dependent carboxylate-amine ligase which exhibits weak glutamate--cysteine ligase activity. The polypeptide is Putative glutamate--cysteine ligase 2 (Rhodopirellula baltica (strain DSM 10527 / NCIMB 13988 / SH1)).